We begin with the raw amino-acid sequence, 635 residues long: MVSIRLPDGSVRQYEHPVTVAEVAASIGPGLAKAALGGKLDGELVDTSAVIDRDASLAIVTDKDADGLDIIRHSTAHLLAYAVKELYPDAQVTIGPVIDNGFYYDFSYNRPFTPEDLEKIEKRMQELVKKDEPVTRRVVSRDEAAGYFRSIGEKYKAEIIESIPQSDEIKLYSHGGFTDLCRGPHVPSTGKLKVFKLMKVAGAYWRGDSKNEQLQRIYGTAWTRKEDQDQYLHMLEEAEKRDHRKLGKQLDLFHMQEESPGMVFWHPKGWALWQQVEQYMRRRVNEAGYLEIKTPMIMDRSLWEASGHWQNYRENMFTTESEKRDYAIKPMNCPGHVQVFKHGLRSYRDLPLRYAEFGSCHRNEASGALHGLMRVRGFVQDDAHIFCTEDQFISESIAFNTLAMSVYKDFGFDHIDIKLSLRPEQRAGTDETWDRAEQGLRDALTACGLTWEELPGEGAFYGPKIEYHIKDALGRSWQCGTLQLDMVLPERLGAEYVADDSSRRRPVMLHRAIVGSMERFLGILIEHHAGAMPAWLAPFQAVVLNIAESQAEYAQSLAQSLQKQGVRVTADLRNEKISYKIREHTLEKVPYLLVVGDKERDAQTVAVRARGGVDLGVMPVEAFVERLQEDLRSFK.

The 61-residue stretch at 1–61 (MVSIRLPDGS…DRDASLAIVT (61 aa)) folds into the TGS domain. The catalytic stretch occupies residues 242–533 (DHRKLGKQLD…LIEHHAGAMP (292 aa)). Zn(2+)-binding residues include Cys-333, His-384, and His-510.

The protein belongs to the class-II aminoacyl-tRNA synthetase family. In terms of assembly, homodimer. Zn(2+) is required as a cofactor.

The protein resides in the cytoplasm. The catalysed reaction is tRNA(Thr) + L-threonine + ATP = L-threonyl-tRNA(Thr) + AMP + diphosphate + H(+). Catalyzes the attachment of threonine to tRNA(Thr) in a two-step reaction: L-threonine is first activated by ATP to form Thr-AMP and then transferred to the acceptor end of tRNA(Thr). Also edits incorrectly charged L-seryl-tRNA(Thr). This chain is Threonine--tRNA ligase, found in Burkholderia lata (strain ATCC 17760 / DSM 23089 / LMG 22485 / NCIMB 9086 / R18194 / 383).